The following is a 283-amino-acid chain: Bifunctional protein FolD 2 (283 aa).

NADP(+) contacts are provided by residues 165–167 (GRG), Thr192, and Val233.

Belongs to the tetrahydrofolate dehydrogenase/cyclohydrolase family. As to quaternary structure, homodimer.

The catalysed reaction is (6R)-5,10-methylene-5,6,7,8-tetrahydrofolate + NADP(+) = (6R)-5,10-methenyltetrahydrofolate + NADPH. It catalyses the reaction (6R)-5,10-methenyltetrahydrofolate + H2O = (6R)-10-formyltetrahydrofolate + H(+). It functions in the pathway one-carbon metabolism; tetrahydrofolate interconversion. Its function is as follows. Catalyzes the oxidation of 5,10-methylenetetrahydrofolate to 5,10-methenyltetrahydrofolate and then the hydrolysis of 5,10-methenyltetrahydrofolate to 10-formyltetrahydrofolate. The protein is Bifunctional protein FolD 2 of Nocardioides sp. (strain ATCC BAA-499 / JS614).